The following is a 101-amino-acid chain: Gibberellin-regulated protein 6 (101 aa).

Positions 1–23 are cleaved as a signal peptide; that stretch reads MAKLITSFLLLTILFTFVCLTMS.

The protein belongs to the GASA family. Six disulfide bonds may be present.

The protein resides in the secreted. Gibberellin-regulated protein that may function in hormonal controlled steps of development such as seed germination, flowering and seed maturation. The chain is Gibberellin-regulated protein 6 (GASA6) from Arabidopsis thaliana (Mouse-ear cress).